Reading from the N-terminus, the 323-residue chain is CTD kinase subunit beta (323 aa).

The protein belongs to the cyclin family. As to quaternary structure, CTDK-I consists of three subunits, CTK1, CTK2 and CTK3 (also called alpha, beta and gamma). Interacts with CTK1. Heterodimerization with CTK3 is required to protect this subunit from degradation. Post-translationally, phosphorylated. Ubiquitinated. Phosphorylation and ubiquitination lead to degradation in growth-related way by the ubiquitin-proteasome pathway. Neither phosphorylation nor degradation requires association with CTK1.

It is found in the nucleus. Its subcellular location is the nucleolus. In terms of biological role, cyclin subunit of the CTDK-I complex, which hyperphosphorylates the C-terminal heptapeptide repeat domain (CTD) of the largest RNA polymerase II subunit. CTDK-I phosphorylates 'Ser-5' if the CTD substrate is not phosphorylated at 'Ser-5', but will phosphorylate 'Ser-2' of a CTD substrate if 'Ser-5' is already phosphorylated. CTDK-I is also more reactive toward substrates that are prephosphorylated at 'Ser-2' or 'Ser-5' compared with an unphosphorylated CTD substrate, therefore efficiently creating doubly phosphorylated CTD repeats. Involved in RNA polymerase II transcriptional elongation, and as part of the CTDK-I complex, pre-mRNA 3'-end processing and SET2 mediated H3K36 methylation. Together with CTK3, required for CTK1 CTD kinase activation. Required for DNA damage induced transcription. Involved in the adaptation to alternative carbon sources, including galactose, glycerol and ethanol, but not raffinose. Required for the integrity of the rDNA locus. In Saccharomyces cerevisiae (strain ATCC 204508 / S288c) (Baker's yeast), this protein is CTD kinase subunit beta (CTK2).